The primary structure comprises 116 residues: Non-specific lipid-transfer protein D, cotyledon-specific isoform (116 aa).

Positions 1-24 (MKNIFFSVFFLLSFLLCLANVSEA) are cleaved as a signal peptide. 4 cysteine pairs are disulfide-bonded: C28–C76, C38–C53, C54–C98, and C74–C112.

The protein belongs to the plant LTP family.

Plant non-specific lipid-transfer proteins transfer phospholipids as well as galactolipids across membranes. May play a role in wax or cutin deposition in the cell walls of expanding epidermal cells and certain secretory tissues. This Ricinus communis (Castor bean) protein is Non-specific lipid-transfer protein D, cotyledon-specific isoform.